The following is a 165-amino-acid chain: MGLLSILRKLKSAPDQEVRILLLGLDNAGKTTLLKQLASEDISHITPTQGFNIKSVQSQGFKLNVWDIGGQRKIRPYWKNYFENTDILELAELLEEEKLSCVPVLIFANKQDLLTAAPASEIAEGLNLHTIRDRVWQIQSCSALTGEGVQDGMNWVCKNVNAKKK.

The N-myristoyl glycine moiety is linked to residue glycine 2. Serine 5 carries the phosphoserine modification. Residues 24 to 31, 67 to 71, and 109 to 112 each bind GTP; these read GLDNAGKT, DIGGQ, and NKQD.

The protein belongs to the small GTPase superfamily. Arf family. As to quaternary structure, found in a complex with ARL3, RP2 and UNC119 (or UNC119B); RP2 induces hydrolysis of GTP ARL3 in the complex, leading to the release of UNC119 (or UNC119B). Interacts with RP2; interaction is direct and stimulated with the activated GTP-bound form of ARL3. Interacts with SYS1. Interacts with ARL2BP; the GTP-bound form interacts with ARL2BP. Microtubule-associated protein. Does not interact with TBCC. Interacts with RP2. Interacts with PDE6D; the interaction occurs specifically with the GTP-bound form of ARL3. Interacts with GGA1; the interaction recruits PKD1:PKD2 complex to trans-Golgi network and is required for ciliary targeting of PKD1:PKD2 complex. Interacts with DNAAF9.

Its subcellular location is the golgi apparatus membrane. It is found in the cytoplasm. The protein resides in the cytoskeleton. It localises to the spindle. The protein localises to the nucleus. Its subcellular location is the microtubule organizing center. It is found in the centrosome. The protein resides in the cell projection. It localises to the cilium. Small GTP-binding protein which cycles between an inactive GDP-bound and an active GTP-bound form, and the rate of cycling is regulated by guanine nucleotide exchange factors (GEF) and GTPase-activating proteins (GAP). Required for normal cytokinesis and cilia signaling. Requires assistance from GTPase-activating proteins (GAPs) like RP2 and PDE6D, in order to cycle between inactive GDP-bound and active GTP-bound forms. Required for targeting proteins to the cilium, including myristoylated NPHP3 and prenylated INPP5E. Targets NPHP3 to the ciliary membrane by releasing myristoylated NPHP3 from UNC119B cargo adapter into the cilium. Required for PKD1:PKD2 complex targeting from the trans-Golgi network to the cilium. The polypeptide is ADP-ribosylation factor-like protein 3 (ARL3) (Pongo abelii (Sumatran orangutan)).